The following is an 82-amino-acid chain: Transcription elongation factor 1 homolog (82 aa).

Positions 26, 29, 50, and 53 each coordinate Zn(2+).

The protein belongs to the ELOF1 family.

It localises to the nucleus. Its function is as follows. Transcription elongation factor implicated in the maintenance of proper chromatin structure in actively transcribed regions. This is Transcription elongation factor 1 homolog from Drosophila melanogaster (Fruit fly).